Reading from the N-terminus, the 319-residue chain is tRNA uridine(34) hydroxylase (319 aa).

Residues 125-219 (LDENTVVIDA…YGKDPEVQGD (95 aa)) form the Rhodanese domain. Cys-179 (cysteine persulfide intermediate) is an active-site residue.

The protein belongs to the TrhO family.

The enzyme catalyses uridine(34) in tRNA + AH2 + O2 = 5-hydroxyuridine(34) in tRNA + A + H2O. Its function is as follows. Catalyzes oxygen-dependent 5-hydroxyuridine (ho5U) modification at position 34 in tRNAs. The polypeptide is tRNA uridine(34) hydroxylase (Lactococcus lactis subsp. cremoris (strain MG1363)).